The following is a 312-amino-acid chain: DNA-directed RNA polymerase subunit alpha (312 aa).

An alpha N-terminal domain (alpha-NTD) region spans residues 1 to 226 (MIEFEKPIIT…EHLNLFTDLT (226 aa)). An alpha C-terminal domain (alpha-CTD) region spans residues 242–312 (NDEKLLDRTI…DLGLGLKNDK (71 aa)).

The protein belongs to the RNA polymerase alpha chain family. As to quaternary structure, homodimer. The RNAP catalytic core consists of 2 alpha, 1 beta, 1 beta' and 1 omega subunit. When a sigma factor is associated with the core the holoenzyme is formed, which can initiate transcription.

It carries out the reaction RNA(n) + a ribonucleoside 5'-triphosphate = RNA(n+1) + diphosphate. In terms of biological role, DNA-dependent RNA polymerase catalyzes the transcription of DNA into RNA using the four ribonucleoside triphosphates as substrates. This Streptococcus thermophilus (strain CNRZ 1066) protein is DNA-directed RNA polymerase subunit alpha.